The following is a 519-amino-acid chain: Histidine--tRNA ligase (519 aa).

This sequence belongs to the class-II aminoacyl-tRNA synthetase family. Homodimer.

The protein localises to the cytoplasm. It catalyses the reaction tRNA(His) + L-histidine + ATP = L-histidyl-tRNA(His) + AMP + diphosphate + H(+). This is Histidine--tRNA ligase from Rhodopseudomonas palustris (strain BisB18).